A 485-amino-acid chain; its full sequence is E3 ubiquitin-protein ligase TRIM68 (485 aa).

An RING-type zinc finger spans residues 16–61; sequence CPICMTFLREPVSISCGHTFCHSCLSGLWKLPGESQNLSYTCPLCR. The B box-type zinc finger occupies 93 to 134; that stretch reads LKTDVCDLHKEQLTMFCKEDDMVTCEACKQSPEHEAHSVVPI. The Zn(2+) site is built by Cys98, His101, Cys120, and His126. Residues 144-226 adopt a coiled-coil conformation; it reads KLQQALEHLR…EQEKGETASK (83 aa). Residues 285–483 form the B30.2/SPRY domain; that stretch reads LKTDCRVLGL…TPLTICTLGG (199 aa).

It belongs to the TRIM/RBCC family. In terms of assembly, interacts with AR/androgen receptor (via ligand-binding domain). Interacts with KAT5/TIP60. In terms of processing, auto-ubiquitinated.

It is found in the cytoplasm. The protein localises to the perinuclear region. The protein resides in the nucleus. It carries out the reaction S-ubiquitinyl-[E2 ubiquitin-conjugating enzyme]-L-cysteine + [acceptor protein]-L-lysine = [E2 ubiquitin-conjugating enzyme]-L-cysteine + N(6)-ubiquitinyl-[acceptor protein]-L-lysine.. The protein operates within protein modification; protein ubiquitination. Its function is as follows. Functions as a ubiquitin E3 ligase. Acts as a coactivator of androgen receptor (AR) depending on its ubiquitin ligase activity. In Mus musculus (Mouse), this protein is E3 ubiquitin-protein ligase TRIM68 (Trim68).